The following is a 101-amino-acid chain: uncharacterized protein (101 aa).

A helical transmembrane segment spans residues 17-37 (VIKILLISGISRIIILILAMF).

The protein localises to the endoplasmic reticulum membrane. This is an uncharacterized protein from Schizosaccharomyces pombe (strain 972 / ATCC 24843) (Fission yeast).